Here is a 196-residue protein sequence, read N- to C-terminus: NADH-quinone oxidoreductase subunit B (196 aa).

The [4Fe-4S] cluster site is built by cysteine 63, cysteine 64, cysteine 129, and cysteine 159.

The protein belongs to the complex I 20 kDa subunit family. NDH-1 is composed of 14 different subunits. Subunits NuoB, C, D, E, F, and G constitute the peripheral sector of the complex. It depends on [4Fe-4S] cluster as a cofactor.

The protein localises to the cell inner membrane. The catalysed reaction is a quinone + NADH + 5 H(+)(in) = a quinol + NAD(+) + 4 H(+)(out). NDH-1 shuttles electrons from NADH, via FMN and iron-sulfur (Fe-S) centers, to quinones in the respiratory chain. The immediate electron acceptor for the enzyme in this species is believed to be a menaquinone. Couples the redox reaction to proton translocation (for every two electrons transferred, four hydrogen ions are translocated across the cytoplasmic membrane), and thus conserves the redox energy in a proton gradient. The polypeptide is NADH-quinone oxidoreductase subunit B (Bacteroides fragilis (strain ATCC 25285 / DSM 2151 / CCUG 4856 / JCM 11019 / LMG 10263 / NCTC 9343 / Onslow / VPI 2553 / EN-2)).